A 451-amino-acid chain; its full sequence is Bifunctional protein GlmU (451 aa).

Positions 1–226 are pyrophosphorylase; sequence MVAVAILAAG…YLEISGINDR (226 aa). Residues 7 to 10, Lys21, Gln73, and 78 to 79 contribute to the UDP-N-acetyl-alpha-D-glucosamine site; these read LAAG and GT. Asp103 contacts Mg(2+). The UDP-N-acetyl-alpha-D-glucosamine site is built by Gly140, Glu155, Asn170, and Asn224. Mg(2+) is bound at residue Asn224. Residues 227–247 form a linker region; sequence KQLATAYDILQNRIKDYWMRA. Residues 248 to 451 form an N-acetyltransferase region; it reads GVTLIDPDSI…ISGWRMKTDD (204 aa). UDP-N-acetyl-alpha-D-glucosamine is bound by residues Arg329 and Lys347. The Proton acceptor role is filled by His359. Residues Tyr362 and Asn373 each coordinate UDP-N-acetyl-alpha-D-glucosamine. Acetyl-CoA-binding positions include Ala376, 382 to 383, Ala419, and Arg436; that span reads NY.

This sequence in the N-terminal section; belongs to the N-acetylglucosamine-1-phosphate uridyltransferase family. The protein in the C-terminal section; belongs to the transferase hexapeptide repeat family. Homotrimer. Mg(2+) serves as cofactor.

Its subcellular location is the cytoplasm. It carries out the reaction alpha-D-glucosamine 1-phosphate + acetyl-CoA = N-acetyl-alpha-D-glucosamine 1-phosphate + CoA + H(+). The catalysed reaction is N-acetyl-alpha-D-glucosamine 1-phosphate + UTP + H(+) = UDP-N-acetyl-alpha-D-glucosamine + diphosphate. Its pathway is nucleotide-sugar biosynthesis; UDP-N-acetyl-alpha-D-glucosamine biosynthesis; N-acetyl-alpha-D-glucosamine 1-phosphate from alpha-D-glucosamine 6-phosphate (route II): step 2/2. The protein operates within nucleotide-sugar biosynthesis; UDP-N-acetyl-alpha-D-glucosamine biosynthesis; UDP-N-acetyl-alpha-D-glucosamine from N-acetyl-alpha-D-glucosamine 1-phosphate: step 1/1. It participates in bacterial outer membrane biogenesis; LPS lipid A biosynthesis. Its function is as follows. Catalyzes the last two sequential reactions in the de novo biosynthetic pathway for UDP-N-acetylglucosamine (UDP-GlcNAc). The C-terminal domain catalyzes the transfer of acetyl group from acetyl coenzyme A to glucosamine-1-phosphate (GlcN-1-P) to produce N-acetylglucosamine-1-phosphate (GlcNAc-1-P), which is converted into UDP-GlcNAc by the transfer of uridine 5-monophosphate (from uridine 5-triphosphate), a reaction catalyzed by the N-terminal domain. The sequence is that of Bifunctional protein GlmU from Gloeothece citriformis (strain PCC 7424) (Cyanothece sp. (strain PCC 7424)).